The primary structure comprises 282 residues: Aspergillopepsin-2 (282 aa).

A signal peptide spans 1-18 (MKFSTILTGSLFATAALA). Propeptides lie at residues 19-59 (APLT…GTTN) and 99-109 (GGGYGYWKNKR). Residues 27 to 39 (ARKEARAAGKRHS) show a composition bias toward basic residues. Residues 27–46 (ARKEARAAGKRHSNPPYIPG) are disordered. Position 110 is a pyrrolidone carboxylic acid (Q110). 2 cysteine pairs are disulfide-bonded: C115-C139 and C127-C210.

The protein belongs to the peptidase G1 family. Heterodimer of two noncovalently bound light and heavy chains.

The catalysed reaction is Preferential cleavage in B chain of insulin: 3-Asn-|-Gln-4, 13-Gly-|-Ala-14, and 26-Tyr-|-Thr-27.. The sequence is that of Aspergillopepsin-2 from Aspergillus niger.